Reading from the N-terminus, the 170-residue chain is Protein SprT (170 aa).

A SprT-like domain is found at 22–165 (LQLANQHLGT…RQCGEKLQFI (144 aa)). Residue H78 coordinates Zn(2+). The active site involves E79. H82 contacts Zn(2+).

Belongs to the SprT family. Requires Zn(2+) as cofactor.

It localises to the cytoplasm. This is Protein SprT from Yersinia pseudotuberculosis serotype IB (strain PB1/+).